The sequence spans 397 residues: Geranylgeranyl pyrophosphate synthase AN1592 (397 aa).

Residues Met-1–Ile-67 form a disordered region. Positions Ser-13–Ile-42 are enriched in basic and acidic residues. Positions Ser-52–Ile-67 are enriched in low complexity. Isopentenyl diphosphate contacts are provided by Lys-120, Arg-123, and His-152. The Mg(2+) site is built by Asp-159 and Asp-163. Arg-168 is a dimethylallyl diphosphate binding site. Isopentenyl diphosphate is bound at residue Arg-169. Residues Lys-247, Thr-248, and Gln-281 each coordinate dimethylallyl diphosphate. Asp-284 is a binding site for Mg(2+). Residues Asn-288, Lys-298, and Lys-308 each coordinate dimethylallyl diphosphate.

Belongs to the FPP/GGPP synthase family. The cofactor is Mg(2+).

The enzyme catalyses isopentenyl diphosphate + dimethylallyl diphosphate = (2E)-geranyl diphosphate + diphosphate. It catalyses the reaction isopentenyl diphosphate + (2E)-geranyl diphosphate = (2E,6E)-farnesyl diphosphate + diphosphate. The catalysed reaction is isopentenyl diphosphate + (2E,6E)-farnesyl diphosphate = (2E,6E,10E)-geranylgeranyl diphosphate + diphosphate. The protein operates within secondary metabolite biosynthesis; terpenoid biosynthesis. Geranylgeranyl pyrophosphate synthase; part of the gene cluster that mediates the biosynthesis of the diterpene ent-pimara-8(14),15-diene (PD). Within the cluster, the HMG-CoA reductase AN1593 functions in the mevalonate pathway, which produces isoprenoid precursors. The geranylgeranyl pyrophosphate (GGPP) synthase AN1592 is needed in the formation of GGPP, the precursor for diterpenes. Lastly, the pimaradiene synthase pbcA performs the 2 cyclization steps that convert GGPP to ent-pimara-8(14),15-diene. The putative roles of the remaining cluster enzymes in ent-pimara-8(14),15-diene biosynthesis is unclear. The cytochrome P450 monooxygenase AN1598, the glutathione S-transferase AN1595, the oxidoreductases AN1596 and AN1597 probably function as decorative enzymes. It is possible that in biological conditions the compound is oxidized to ent-pimara-8(14),15-dien-19-oic acid, which is a bioactive diterpene compound predominant in many plant extracts. The polypeptide is Geranylgeranyl pyrophosphate synthase AN1592 (Emericella nidulans (strain FGSC A4 / ATCC 38163 / CBS 112.46 / NRRL 194 / M139) (Aspergillus nidulans)).